A 558-amino-acid polypeptide reads, in one-letter code: Solute carrier family 22 member 6-A (558 aa).

Residues 1–15 (MSFAELLERTGGMGR) are Cytoplasmic-facing. The chain crosses the membrane as a helical span at residues 16–36 (FQITQVALMCFPILLMASHNL). At 37-140 (LQNFSAAIPD…LVCGHKNRRQ (104 aa)) the chain is on the extracellular side. A helical transmembrane segment spans residues 141-161 (LAQSVYMGGVLVGAIILGGLS). The Cytoplasmic segment spans residues 162-167 (DRYGRR). The helical transmembrane segment at 168 to 188 (ALLIWSYFQMAVSGLCSAFSP) threads the bilayer. Residues 189–197 (NYLSYCIFR) are Extracellular-facing. A helical transmembrane segment spans residues 198–218 (FLTGMALSGIGLNTTALIVEW). At 219–225 (VPTRVRT) the chain is on the cytoplasmic side. Residues 226–246 (ITGTLAGFSYTVGQLLLAGLA) form a helical membrane-spanning segment. Topologically, residues 247-253 (YAMRDWR) are extracellular. The chain crosses the membrane as a helical span at residues 254 to 274 (WLQLCVSLPFFIFFLYSWWFP). At 275 to 342 (ESARWLVLSG…DLIRTSTIRR (68 aa)) the chain is on the cytoplasmic side. Residues 343 to 363 (ISCALSLVWFSTSFAYYGLAM) traverse the membrane as a helical segment. At 364-369 (DLQNFN) the chain is on the extracellular side. Residues 370–390 (VSIYLIQVIFGAVDFPAKIFS) form a helical membrane-spanning segment. Residues 391–400 (TTAMIYVGRK) lie on the Cytoplasmic side of the membrane. The helical transmembrane segment at 401-421 (FTQLMSLILGGVVILANSFVP) threads the bilayer. Topologically, residues 422 to 428 (HEMQTVR) are extracellular. The helical transmembrane segment at 429–449 (TGMAVFGKGCLAASFSCVFLY) threads the bilayer. Residues 450 to 462 (TTELYPTVIRQSG) lie on the Cytoplasmic side of the membrane. A helical membrane pass occupies residues 463 to 483 (LGLCSTMARIGGIVAPLVKIL). Residues 484-488 (GEYYP) lie on the Extracellular side of the membrane. The chain crosses the membrane as a helical span at residues 489–509 (FLPLVIYGGAPIISGLCVFFL). Residues 510-558 (PETVNKPLPDTIEEVEKRIKAPKKENEMNEIVSLKKKEGMKENPVNDVL) lie on the Cytoplasmic side of the membrane. The span at 539–550 (EIVSLKKKEGMK) shows a compositional bias: basic and acidic residues. Residues 539 to 558 (EIVSLKKKEGMKENPVNDVL) form a disordered region.

This sequence belongs to the major facilitator (TC 2.A.1) superfamily. Organic cation transporter (TC 2.A.1.19) family. Post-translationally, glycosylated. Glycosylation is necessary for proper targeting of the transporter to the plasma membrane.

It is found in the cell membrane. The protein resides in the basolateral cell membrane. The protein localises to the basal cell membrane. Functionally, involved in the renal elimination of endogenous and exogenous organic anions. Mediates the sodium-independent uptake of p-aminohippurate (PAH), 2,3-dimercapto-1-propanesulfonic acid (DMPS), cidofovir, adefovir, 9-(2-phosphonylmethoxyethyl) guanine (PMEG), 9-(2-phosphonylmethoxyethyl) diaminopurine (PMEDAP), ochratoxin (OTA), acyclovir (ACV), 3'-azido-3-'deoxythymidine (AZT), cimetidine (CMD), 2,4-dichloro-phenoxyacetate (2,4-D), hippurate (HA), indoleacetate (IA), indoxyl sulfate (IS) and 3-carboxy-4-methyl-5-propyl-2-furanpropionate (CMPF) and edaravone sulfate. PAH uptake is inhibited by p-chloromercuribenzenesulphonate (PCMBS), diethyl pyrocarbonate (DEPC), indomethacin, sulindac, diclofenac, carprofen, okadaic acid, benzothiazolylcysteine (BTC), S-chlorotrifluoroethylcysteine (CTFC), cysteine S-conjugates S-dichlorovinylcysteine (DCVC), furosemide, steviol, phorbol 12-myristate 13-acetate (PMA), calcium ionophore A23187, benzylpenicillin, bumetamide, losartan, probenecid, phenol red, urate, glutarate and alpha-ketoglutarate. This Xenopus laevis (African clawed frog) protein is Solute carrier family 22 member 6-A (slc22a6-a).